A 255-amino-acid polypeptide reads, in one-letter code: tRNA (guanine-N(7)-)-methyltransferase (255 aa).

Positions 1–29 (MMHDDPNEAGLPPDDAALPDEAADGADEV) are disordered. Positions 17-27 (ALPDEAADGAD) are enriched in acidic residues. The S-adenosyl-L-methionine site is built by glutamate 86, glutamate 111, aspartate 138, and aspartate 161. The active site involves aspartate 161. Residues lysine 165, aspartate 197, and 232-235 (TKFE) contribute to the substrate site.

The protein belongs to the class I-like SAM-binding methyltransferase superfamily. TrmB family.

The catalysed reaction is guanosine(46) in tRNA + S-adenosyl-L-methionine = N(7)-methylguanosine(46) in tRNA + S-adenosyl-L-homocysteine. The protein operates within tRNA modification; N(7)-methylguanine-tRNA biosynthesis. In terms of biological role, catalyzes the formation of N(7)-methylguanine at position 46 (m7G46) in tRNA. The polypeptide is tRNA (guanine-N(7)-)-methyltransferase (Burkholderia ambifaria (strain ATCC BAA-244 / DSM 16087 / CCUG 44356 / LMG 19182 / AMMD) (Burkholderia cepacia (strain AMMD))).